We begin with the raw amino-acid sequence, 302 residues long: Glutaminase (302 aa).

Substrate is bound by residues Ser61, Asn111, Glu155, Asn162, Tyr186, Tyr238, and Val256.

Belongs to the glutaminase family. As to quaternary structure, homotetramer.

The enzyme catalyses L-glutamine + H2O = L-glutamate + NH4(+). This is Glutaminase from Pseudomonas fluorescens (strain SBW25).